The sequence spans 67 residues: Large ribosomal subunit protein bL35 (67 aa).

The protein belongs to the bacterial ribosomal protein bL35 family.

The polypeptide is Large ribosomal subunit protein bL35 (Paramagnetospirillum magneticum (strain ATCC 700264 / AMB-1) (Magnetospirillum magneticum)).